Consider the following 439-residue polypeptide: Tol-Pal system protein TolB (439 aa).

The N-terminal stretch at 1–22 (MTKFPRWLAMLVGLLFPLSALT) is a signal peptide.

This sequence belongs to the TolB family. As to quaternary structure, the Tol-Pal system is composed of five core proteins: the inner membrane proteins TolA, TolQ and TolR, the periplasmic protein TolB and the outer membrane protein Pal. They form a network linking the inner and outer membranes and the peptidoglycan layer.

The protein localises to the periplasm. Part of the Tol-Pal system, which plays a role in outer membrane invagination during cell division and is important for maintaining outer membrane integrity. The sequence is that of Tol-Pal system protein TolB from Xylella fastidiosa (strain 9a5c).